The primary structure comprises 99 residues: MAEGGFDPCECVCSHEHAMRRLINLLRQSQSYCTDTECLRELPGPSSDSGISITVILMAWMVIAMLLFLLRPPNLRGSSLPGKPSSPHSGQDPPAPPVD.

Topologically, residues 1 to 49 are lumenal; that stretch reads MAEGGFDPCECVCSHEHAMRRLINLLRQSQSYCTDTECLRELPGPSSDS. The chain crosses the membrane as a helical span at residues 50 to 70; sequence GISITVILMAWMVIAMLLFLL. The Cytoplasmic segment spans residues 71–99; the sequence is RPPNLRGSSLPGKPSSPHSGQDPPAPPVD. Residues 77 to 99 form a disordered region; the sequence is GSSLPGKPSSPHSGQDPPAPPVD.

Ubiquitously expressed.

The protein localises to the endoplasmic reticulum membrane. This chain is Small integral membrane protein 14 (Smim14), found in Mus musculus (Mouse).